Consider the following 370-residue polypeptide: Cysteine synthase 1 (370 aa).

The N-terminal 16 residues, 1–16 (MFRQSVRRFATAALRS), are a transit peptide targeting the mitochondrion. Lys-73 is subject to N6-(pyridoxal phosphate)lysine. Residues Asn-103, 209–213 (GTGGT), and Ser-308 each bind pyridoxal 5'-phosphate.

Belongs to the cysteine synthase/cystathionine beta-synthase family. It depends on pyridoxal 5'-phosphate as a cofactor.

It is found in the mitochondrion. It carries out the reaction O-succinyl-L-serine + hydrogen sulfide = L-cysteine + succinate. It catalyses the reaction O-acetyl-L-serine + hydrogen sulfide = L-cysteine + acetate. Its pathway is amino-acid biosynthesis; L-cysteine biosynthesis; L-cysteine from L-serine: step 2/2. In terms of biological role, catalyzes the conversion of O-succinyl-L-serine into cysteine, the last step in the cysteine biosynthesis pathway. Can also use O-acetyl-L-serine. This is Cysteine synthase 1 from Emericella nidulans (strain FGSC A4 / ATCC 38163 / CBS 112.46 / NRRL 194 / M139) (Aspergillus nidulans).